The primary structure comprises 409 residues: NADH-quinone oxidoreductase subunit D (409 aa).

This sequence belongs to the complex I 49 kDa subunit family. NDH-1 is composed of 14 different subunits. Subunits NuoB, C, D, E, F, and G constitute the peripheral sector of the complex.

The protein localises to the cell inner membrane. It catalyses the reaction a quinone + NADH + 5 H(+)(in) = a quinol + NAD(+) + 4 H(+)(out). In terms of biological role, NDH-1 shuttles electrons from NADH, via FMN and iron-sulfur (Fe-S) centers, to quinones in the respiratory chain. The immediate electron acceptor for the enzyme in this species is believed to be ubiquinone. Couples the redox reaction to proton translocation (for every two electrons transferred, four hydrogen ions are translocated across the cytoplasmic membrane), and thus conserves the redox energy in a proton gradient. This is NADH-quinone oxidoreductase subunit D from Helicobacter acinonychis (strain Sheeba).